A 90-amino-acid chain; its full sequence is Small ribosomal subunit protein bS18 (90 aa).

Belongs to the bacterial ribosomal protein bS18 family. As to quaternary structure, part of the 30S ribosomal subunit. Forms a tight heterodimer with protein bS6.

Its function is as follows. Binds as a heterodimer with protein bS6 to the central domain of the 16S rRNA, where it helps stabilize the platform of the 30S subunit. This is Small ribosomal subunit protein bS18 from Bordetella petrii (strain ATCC BAA-461 / DSM 12804 / CCUG 43448).